Consider the following 580-residue polypeptide: uncharacterized protein (580 aa).

Disordered stretches follow at residues 161 to 241, 256 to 281, 325 to 345, 472 to 495, and 544 to 564; these read SFSP…SVND, LGSLSTNTSSTAQKNKSRKPTKSFSD, NVSHEEKSHSVQDDKSKQLLK, PRDTDIKATPNLSQSGNINSDNSD, and SAVLRRQSSQSSGANDDKEVR. Residues 192-203 show a composition bias toward low complexity; that stretch reads SNSNSSDTSTDD. 2 stretches are compositionally biased toward polar residues: residues 223-241 and 256-269; these read THSSAPPLNQQKSSTSVND and LGSLSTNTSSTAQK. A compositionally biased stretch (basic and acidic residues) spans 326 to 341; it reads VSHEEKSHSVQDDKSK. Positions 481 to 495 are enriched in polar residues; the sequence is PNLSQSGNINSDNSD.

This is an uncharacterized protein from Schizosaccharomyces pombe (strain 972 / ATCC 24843) (Fission yeast).